We begin with the raw amino-acid sequence, 376 residues long: 2-oxoglutarate synthase subunit KorA (376 aa).

As to quaternary structure, heterotetramer of the KorA, KorB, KorC and KorD subunits.

It carries out the reaction 2 oxidized [2Fe-2S]-[ferredoxin] + 2-oxoglutarate + CoA = succinyl-CoA + 2 reduced [2Fe-2S]-[ferredoxin] + CO2 + H(+). This chain is 2-oxoglutarate synthase subunit KorA (korA), found in Methanothermobacter thermautotrophicus (strain ATCC 29096 / DSM 1053 / JCM 10044 / NBRC 100330 / Delta H) (Methanobacterium thermoautotrophicum).